Consider the following 236-residue polypeptide: Snake venom serine protease pallase (236 aa).

In terms of domain architecture, Peptidase S1 spans 1 to 227 (VIGGDECNIN…HLDWIENIIA (227 aa)). Intrachain disulfides connect C7/C139, C26/C42, C74/C234, C118/C188, C150/C167, and C178/C203. Active-site charge relay system residues include H41 and D86. S182 (charge relay system) is an active-site residue.

This sequence belongs to the peptidase S1 family. Snake venom subfamily. Monomer. In terms of tissue distribution, expressed by the venom gland.

It is found in the secreted. In terms of biological role, snake venom serine protease that may act in the hemostasis system of the prey. The protein is Snake venom serine protease pallase of Gloydius halys (Chinese water mocassin).